We begin with the raw amino-acid sequence, 451 residues long: Tubulin beta-1 chain (451 aa).

GTP-binding residues include glutamine 11, glutamate 73, serine 142, glycine 146, threonine 147, glycine 148, asparagine 208, and asparagine 230. Glutamate 73 is a Mg(2+) binding site. Positions 430-451 (QEATADDEAEFEEEGEVEGEYA) are disordered. Positions 433 to 451 (TADDEAEFEEEGEVEGEYA) are enriched in acidic residues.

Belongs to the tubulin family. Dimer of alpha and beta chains. A typical microtubule is a hollow water-filled tube with an outer diameter of 25 nm and an inner diameter of 15 nM. Alpha-beta heterodimers associate head-to-tail to form protofilaments running lengthwise along the microtubule wall with the beta-tubulin subunit facing the microtubule plus end conferring a structural polarity. Microtubules usually have 13 protofilaments but different protofilament numbers can be found in some organisms and specialized cells. The cofactor is Mg(2+).

It is found in the cytoplasm. Its subcellular location is the cytoskeleton. Tubulin is the major constituent of microtubules, a cylinder consisting of laterally associated linear protofilaments composed of alpha- and beta-tubulin heterodimers. Microtubules grow by the addition of GTP-tubulin dimers to the microtubule end, where a stabilizing cap forms. Below the cap, tubulin dimers are in GDP-bound state, owing to GTPase activity of alpha-tubulin. In Homarus americanus (American lobster), this protein is Tubulin beta-1 chain.